Reading from the N-terminus, the 129-residue chain is Protein LLP homolog (129 aa).

Basic residues predominate over residues 1 to 21 (MAKSLRSKWKRKMRAEKRKKN). Positions 1–27 (MAKSLRSKWKRKMRAEKRKKNAPKEAS) are disordered. Glycyl lysine isopeptide (Lys-Gly) (interchain with G-Cter in SUMO2) cross-links involve residues Lys67 and Lys74. The span at 100 to 122 (RQRKRLKAKREKRKGKSKAKAVK) shows a compositional bias: basic residues. The tract at residues 100 to 129 (RQRKRLKAKREKRKGKSKAKAVKVAKGLAW) is disordered.

The protein belongs to the learning-associated protein family. Interacts with CTCF, MYO1C and with the transcriptional machinery, including RNA polymerase II and TBP.

It localises to the nucleus. The protein localises to the nucleolus. Its subcellular location is the chromosome. Functionally, in hippocampal neurons, regulates dendritic and spine growth and synaptic transmission. This chain is Protein LLP homolog (LLPH), found in Homo sapiens (Human).